The primary structure comprises 270 residues: Oxidoreductase claK (270 aa).

This sequence belongs to the avfA family.

The protein operates within pigment biosynthesis. In terms of biological role, oxidoreductase; part of the gene cluster that mediates the biosynthesis of the bianthraquinone cladofulvin, a conidial pigment not required for virulence but that plays a role in fitness and resistance to environmental stresses including UV light and low-temperature stress. The pathway begins with the synthesis of atrochrysone thioester by the polyketide synthase (PKS) claG. The atrochrysone carboxyl ACP thioesterase claF then breaks the thioester bond and releases the atrochrysone carboxylic acid from claG. This compound is decarboxylated by claH to yield emodin, which is further converted to chrysophanol hydroquinone by the reductase claC and the dehydratase claB. The cytochrome monooxygenase P450 claM then catalyzes the dimerization of nataloe-emodin to cladofulvin. The sequence is that of Oxidoreductase claK from Passalora fulva (Tomato leaf mold).